We begin with the raw amino-acid sequence, 268 residues long: Probable chemotaxis protein methyltransferase (268 aa).

The CheR-type methyltransferase domain maps to 1 to 262 (MIYSDAGIFL…GITTYRYTTK (262 aa)). S-adenosyl-L-methionine is bound by residues Asn-60, Thr-62, Arg-66, Glu-104, Asp-130, 188–189 (NL), and 205–206 (RN).

It catalyses the reaction L-glutamyl-[protein] + S-adenosyl-L-methionine = [protein]-L-glutamate 5-O-methyl ester + S-adenosyl-L-homocysteine. Functionally, methylation of the membrane-bound methyl-accepting chemotaxis proteins (MCP) to form gamma-glutamyl methyl ester residues in MCP. This is Probable chemotaxis protein methyltransferase (cheRch1) from Rhizobium etli (strain ATCC 51251 / DSM 11541 / JCM 21823 / NBRC 15573 / CFN 42).